The sequence spans 304 residues: HPr kinase/phosphorylase (304 aa).

Active-site residues include His-136 and Lys-157. An ATP-binding site is contributed by 151-158 (GESGIGKS). Ser-158 lines the Mg(2+) pocket. Catalysis depends on Asp-175, which acts as the Proton acceptor; for phosphorylation activity. Proton donor; for dephosphorylation activity. Residues 198–207 (LEVRGIGIID) are important for the catalytic mechanism of both phosphorylation and dephosphorylation. A Mg(2+)-binding site is contributed by Glu-199. Residue Arg-240 is part of the active site. The interval 261-266 (PVRPGR) is important for the catalytic mechanism of dephosphorylation.

Belongs to the HPrK/P family. In terms of assembly, homohexamer. Requires Mg(2+) as cofactor.

The catalysed reaction is [HPr protein]-L-serine + ATP = [HPr protein]-O-phospho-L-serine + ADP + H(+). It carries out the reaction [HPr protein]-O-phospho-L-serine + phosphate + H(+) = [HPr protein]-L-serine + diphosphate. Its function is as follows. Catalyzes the ATP- as well as the pyrophosphate-dependent phosphorylation of a specific serine residue in HPr, a phosphocarrier protein of the phosphoenolpyruvate-dependent sugar phosphotransferase system (PTS). HprK/P also catalyzes the pyrophosphate-producing, inorganic phosphate-dependent dephosphorylation (phosphorolysis) of seryl-phosphorylated HPr (P-Ser-HPr). The two antagonistic activities of HprK/P are regulated by several intracellular metabolites, which change their concentration in response to the absence or presence of rapidly metabolisable carbon sources (glucose, fructose, etc.) in the growth medium. Therefore, by controlling the phosphorylation state of HPr, HPrK/P is a sensor enzyme that plays a major role in the regulation of carbon metabolism and sugar transport: it mediates carbon catabolite repression (CCR), and regulates PTS-catalyzed carbohydrate uptake and inducer exclusion. In Clostridium botulinum (strain Eklund 17B / Type B), this protein is HPr kinase/phosphorylase.